A 163-amino-acid chain; its full sequence is Cyclic pyranopterin monophosphate synthase (163 aa).

Residues 75 to 77 (MCH) and 113 to 114 (ME) each bind substrate. Residue aspartate 128 is part of the active site.

It belongs to the MoaC family. As to quaternary structure, homohexamer; trimer of dimers.

The catalysed reaction is (8S)-3',8-cyclo-7,8-dihydroguanosine 5'-triphosphate = cyclic pyranopterin phosphate + diphosphate. It functions in the pathway cofactor biosynthesis; molybdopterin biosynthesis. Catalyzes the conversion of (8S)-3',8-cyclo-7,8-dihydroguanosine 5'-triphosphate to cyclic pyranopterin monophosphate (cPMP). The protein is Cyclic pyranopterin monophosphate synthase of Desulforapulum autotrophicum (strain ATCC 43914 / DSM 3382 / VKM B-1955 / HRM2) (Desulfobacterium autotrophicum).